A 30-amino-acid chain; its full sequence is Trypsin inhibitor 3 (30 aa).

Disulfide bonds link cysteine 4–cysteine 21, cysteine 11–cysteine 23, and cysteine 17–cysteine 29.

The protein belongs to the protease inhibitor I7 (squash-type serine protease inhibitor) family.

The protein resides in the secreted. Functionally, inhibits lysyl endopeptidase and trypsin. The polypeptide is Trypsin inhibitor 3 (Cucumis melo var. conomon (Oriental pickling melon)).